The primary structure comprises 314 residues: Ribosomal RNA small subunit methyltransferase H (314 aa).

S-adenosyl-L-methionine-binding positions include 58–60, aspartate 76, phenylalanine 103, aspartate 119, and glutamine 126; that span reads GGH.

Belongs to the methyltransferase superfamily. RsmH family.

The protein resides in the cytoplasm. The catalysed reaction is cytidine(1402) in 16S rRNA + S-adenosyl-L-methionine = N(4)-methylcytidine(1402) in 16S rRNA + S-adenosyl-L-homocysteine + H(+). Its function is as follows. Specifically methylates the N4 position of cytidine in position 1402 (C1402) of 16S rRNA. This chain is Ribosomal RNA small subunit methyltransferase H, found in Gloeobacter violaceus (strain ATCC 29082 / PCC 7421).